Consider the following 175-residue polypeptide: Crossover junction endodeoxyribonuclease RuvC (175 aa).

Active-site residues include D8, E69, and D141. Positions 8, 69, and 141 each coordinate Mg(2+).

This sequence belongs to the RuvC family. Homodimer which binds Holliday junction (HJ) DNA. The HJ becomes 2-fold symmetrical on binding to RuvC with unstacked arms; it has a different conformation from HJ DNA in complex with RuvA. In the full resolvosome a probable DNA-RuvA(4)-RuvB(12)-RuvC(2) complex forms which resolves the HJ. Mg(2+) serves as cofactor.

It is found in the cytoplasm. The catalysed reaction is Endonucleolytic cleavage at a junction such as a reciprocal single-stranded crossover between two homologous DNA duplexes (Holliday junction).. In terms of biological role, the RuvA-RuvB-RuvC complex processes Holliday junction (HJ) DNA during genetic recombination and DNA repair. Endonuclease that resolves HJ intermediates. Cleaves cruciform DNA by making single-stranded nicks across the HJ at symmetrical positions within the homologous arms, yielding a 5'-phosphate and a 3'-hydroxyl group; requires a central core of homology in the junction. The consensus cleavage sequence is 5'-(A/T)TT(C/G)-3'. Cleavage occurs on the 3'-side of the TT dinucleotide at the point of strand exchange. HJ branch migration catalyzed by RuvA-RuvB allows RuvC to scan DNA until it finds its consensus sequence, where it cleaves and resolves the cruciform DNA. The protein is Crossover junction endodeoxyribonuclease RuvC of Colwellia psychrerythraea (strain 34H / ATCC BAA-681) (Vibrio psychroerythus).